The primary structure comprises 114 residues: Amphinase-2 (114 aa).

H15 functions as the Proton acceptor in the catalytic mechanism. Disulfide bonds link C26–C79, C41–C85, C59–C100, and C97–C114. The N-linked (GlcNAc...) asparagine glycan is linked to N27. 42–46 (KPINT) contributes to the substrate binding site. N-linked (GlcNAc...) asparagine glycans are attached at residues N67 and N91. The Proton donor role is filled by H107.

It belongs to the pancreatic ribonuclease family. As to quaternary structure, monomer. In terms of processing, there are at least four different forms arising from glycan heterogeneity.

The protein localises to the secreted. In terms of biological role, endonuclease, hydrolyzes highly polymerized RNA, poly(U) and poly(C), and the dinucleotides CpA and UpA. Hydrolyzes 18S and 28S ribosomal RNA. More active towards rCA than rUA or rUG. Has cytotoxic activity against cultured human submaxillary gland carcinoma cells. The polypeptide is Amphinase-2 (Lithobates pipiens (Northern leopard frog)).